The primary structure comprises 377 residues: tRNA-specific 2-thiouridylase MnmA (377 aa).

ATP-binding positions include 8–15 and M34; that span reads GMSGGVDS. The interaction with target base in tRNA stretch occupies residues 94-96; the sequence is NPD. The Nucleophile role is filled by C99. Residues C99 and C201 are joined by a disulfide bond. G123 contributes to the ATP binding site. Residues 151-153 form an interaction with tRNA region; sequence KDQ. C201 functions as the Cysteine persulfide intermediate in the catalytic mechanism. Positions 315 to 316 are interaction with tRNA; the sequence is RY.

This sequence belongs to the MnmA/TRMU family.

The protein localises to the cytoplasm. The enzyme catalyses S-sulfanyl-L-cysteinyl-[protein] + uridine(34) in tRNA + AH2 + ATP = 2-thiouridine(34) in tRNA + L-cysteinyl-[protein] + A + AMP + diphosphate + H(+). Its function is as follows. Catalyzes the 2-thiolation of uridine at the wobble position (U34) of tRNA, leading to the formation of s(2)U34. This Acinetobacter baumannii (strain AB307-0294) protein is tRNA-specific 2-thiouridylase MnmA.